Consider the following 380-residue polypeptide: Putative 8-amino-7-oxononanoate synthase (380 aa).

Arg18 is a substrate binding site. A pyridoxal 5'-phosphate-binding site is contributed by 106–107; sequence GY. His131 is a binding site for substrate. Pyridoxal 5'-phosphate is bound by residues Ser179, 205-208, and 236-239; these read DEAH and TFGK. The residue at position 239 (Lys239) is an N6-(pyridoxal phosphate)lysine. Thr352 contributes to the substrate binding site.

Belongs to the class-II pyridoxal-phosphate-dependent aminotransferase family. BioF subfamily. Homodimer. It depends on pyridoxal 5'-phosphate as a cofactor.

It carries out the reaction 6-carboxyhexanoyl-[ACP] + L-alanine + H(+) = (8S)-8-amino-7-oxononanoate + holo-[ACP] + CO2. It participates in cofactor biosynthesis; biotin biosynthesis. Functionally, catalyzes the decarboxylative condensation of pimeloyl-[acyl-carrier protein] and L-alanine to produce 8-amino-7-oxononanoate (AON), [acyl-carrier protein], and carbon dioxide. This Neisseria meningitidis serogroup B (strain ATCC BAA-335 / MC58) protein is Putative 8-amino-7-oxononanoate synthase (bioF).